A 487-amino-acid chain; its full sequence is MKPIADLRSYLEFLESKDMLRRVSVEASPILEIPEILRRIMYRGSGYAVLFEKVKGHEGFRIAGNIFCSLDVVRQALGVERLEVIGERLFEPLKGPPPLGIGGKLRSLGEVLSLGKYMPKAVGRAGFTANVLEGREASFNLIPAFKVWPKDGGRYLTYALVHVRDPVRGVMNMGVYRVMIAGDKEGVVHWQIHKRGMQAQQDSVEKGERRIPAALVIGSDPGTLLTGAMPVPYPIDKHLFAGVVRGEGLPVYRLPNGIHVPANAEIVLEGYIDLEDLREEGPYGDHFGYYDKPSRLFPTFRLERVWHREEPIYYGSVTGKPPLEDVVIGKFAERIFLPAIQTLLPEVVDIDLPPHGVFQGMAFVSIRKRYPGHGKKALLALMGLGQLSLTKIIVVVDHDINVHDVNQVIWAVSSHVDPQRDVLVVPHSHTDELDPATPTPMYGSKLGIDATRKLPEEYGGKQWPEEVAPDPETVRLVEGRWGEYGLD.

The protein belongs to the UbiD family.

This is an uncharacterized protein from Aeropyrum pernix (strain ATCC 700893 / DSM 11879 / JCM 9820 / NBRC 100138 / K1).